We begin with the raw amino-acid sequence, 906 residues long: Probable helicase HelY (906 aa).

The region spanning 26-184 (CSALERGHGV…WIQTVRGDTT (159 aa)) is the Helicase ATP-binding domain. 39 to 46 (APTGAGKT) is an ATP binding site. Positions 132-135 (DEVH) match the DEVH box motif. The Helicase C-terminal domain maps to 259–463 (GRPEVIAKLD…SYNMTINLVH (205 aa)).

Belongs to the helicase family. SKI2 subfamily.

In Mycobacterium tuberculosis (strain CDC 1551 / Oshkosh), this protein is Probable helicase HelY (helY).